A 272-amino-acid chain; its full sequence is NH(3)-dependent NAD(+) synthetase (272 aa).

45–52 (GISGGQDS) provides a ligand contact to ATP. D51 is a Mg(2+) binding site. A deamido-NAD(+)-binding site is contributed by R138. T158 serves as a coordination point for ATP. E163 serves as a coordination point for Mg(2+). Deamido-NAD(+) is bound by residues K171 and D178. ATP is bound by residues K187 and T209. 258–259 (HK) is a deamido-NAD(+) binding site.

This sequence belongs to the NAD synthetase family. Homodimer.

It carries out the reaction deamido-NAD(+) + NH4(+) + ATP = AMP + diphosphate + NAD(+) + H(+). Its pathway is cofactor biosynthesis; NAD(+) biosynthesis; NAD(+) from deamido-NAD(+) (ammonia route): step 1/1. Catalyzes the ATP-dependent amidation of deamido-NAD to form NAD. Uses ammonia as a nitrogen source. The protein is NH(3)-dependent NAD(+) synthetase of Bacillus cereus (strain ATCC 14579 / DSM 31 / CCUG 7414 / JCM 2152 / NBRC 15305 / NCIMB 9373 / NCTC 2599 / NRRL B-3711).